A 361-amino-acid chain; its full sequence is Uroporphyrinogen decarboxylase (361 aa).

Substrate-binding positions include 27–31 (RQAGR), Asp-77, Tyr-154, Thr-209, and His-327.

The protein belongs to the uroporphyrinogen decarboxylase family. As to quaternary structure, homodimer.

It localises to the cytoplasm. It catalyses the reaction uroporphyrinogen III + 4 H(+) = coproporphyrinogen III + 4 CO2. It functions in the pathway porphyrin-containing compound metabolism; protoporphyrin-IX biosynthesis; coproporphyrinogen-III from 5-aminolevulinate: step 4/4. Its function is as follows. Catalyzes the decarboxylation of four acetate groups of uroporphyrinogen-III to yield coproporphyrinogen-III. This chain is Uroporphyrinogen decarboxylase, found in Coxiella burnetii (strain Dugway 5J108-111).